We begin with the raw amino-acid sequence, 256 residues long: Fumarate reductase cytochrome b subunit (256 aa).

Topologically, residues 1–30 (MTNESILESYSGVTPERKKSRMPAKLDWWQ) are cytoplasmic. Residues 31-52 (SATGLFLGLFMIGHMFFVSTIL) form a helical membrane-spanning segment. Heme b is bound at residue histidine 44. The Periplasmic segment spans residues 53–76 (LGDNVMLWVTKKFELDFIFEGGKP). The chain crosses the membrane as a helical span at residues 77–98 (IVVSFLAAFVFAVFIAHAFLAM). Position 93 (histidine 93) interacts with heme b. Topologically, residues 99–124 (RKFPINYRQYLTFKTHKDLMRHGDTT) are cytoplasmic. Residues 125 to 149 (LWWIQAMTGFAMFFLGSVHLYIMMT) traverse the membrane as a helical segment. Residue histidine 143 participates in heme b binding. Over 150–165 (QPQTIGPVSSSFRMVS) the chain is Periplasmic. Residues 166-188 (EWMWPLYLVLLFAVELHGSVGLY) form a helical membrane-spanning segment. Histidine 182 contacts heme b. The Cytoplasmic segment spans residues 189 to 206 (RLAVKWGWFDGETPDKTR). The helical transmembrane segment at 207 to 230 (ANLKKLKTLMSAFLIVLGLLTFGA) threads the bilayer. The Periplasmic segment spans residues 231–256 (YVKKGLEQTDPNIDYKYFDYKRTHHR).

This sequence belongs to the diheme cytochrome b FrdC family. As to quaternary structure, part of an enzyme complex containing three subunits: a flavoprotein (frdA), an iron-sulfur protein (frdB), and diheme cytochrome b (frdC). Heme b is required as a cofactor.

The protein resides in the cell inner membrane. Its function is as follows. The fumarate reductase enzyme complex is required for fumarate respiration using formate or sulfide as electron donor. This subunit anchors the complex in the membrane and binds a diheme cytochrome b. The sequence is that of Fumarate reductase cytochrome b subunit (frdC) from Wolinella succinogenes (strain ATCC 29543 / DSM 1740 / CCUG 13145 / JCM 31913 / LMG 7466 / NCTC 11488 / FDC 602W) (Vibrio succinogenes).